We begin with the raw amino-acid sequence, 758 residues long: Vitamin K-dependent gamma-carboxylase (758 aa).

Residues 1–31 (MAVSARSARSPPDSDKVQKDKAGQTSGRRQG) form a disordered region. An N-acetylalanine modification is found at alanine 2. At 2-60 (AVSARSARSPPDSDKVQKDKAGQTSGRRQGSRMGKLLGFEWTDVSSWGKLVTLLNRPTD) the chain is on the cytoplasmic side. The span at 12-22 (PDSDKVQKDKA) shows a compositional bias: basic and acidic residues. The chain crosses the membrane as a helical span at residues 61 to 81 (PASLAVFRFLFGLMMVLDIPQ). Topologically, residues 82–113 (ERGLSSLDRRYLDGLEVCRFPLLDALQPLPLD) are lumenal. An intrachain disulfide couples cysteine 99 to cysteine 450. The chain crosses the membrane as a helical span at residues 114–134 (WMYLVYTIMFLGALGMMLGLR). Residues 135–136 (YR) lie on the Cytoplasmic side of the membrane. The chain crosses the membrane as a helical span at residues 137–157 (ISCVLFLLPYWYVFLLDKTSW). Over 158–292 (NNHSYLYGLL…VSYFHCMNSQ (135 aa)) the chain is Lumenal. A helical transmembrane segment spans residues 293 to 313 (LFSIGMFPYVMLASSPLFCSP). Residues 314-361 (EWPRKLVAHCPKRLQELLPLRTAPQPSASCVYKRSRAKGGQKPGLRHR) lie on the Cytoplasmic side of the membrane. Residues 362 to 382 (LGAAFTLLYLLEQLFLPYSHF) traverse the membrane as a helical segment. The Lumenal segment spans residues 383 to 758 (LTQGYNNWTN…PNADAVHSEF (376 aa)). Residues 727-758 (PFEPVGEPSPSNTDSSNPNPSEPNADAVHSEF) form a disordered region. Over residues 734-750 (PSPSNTDSSNPNPSEPN) the composition is skewed to low complexity.

The protein belongs to the vitamin K-dependent gamma-carboxylase family. Monomer. May interact with CALU.

Its subcellular location is the endoplasmic reticulum membrane. It carries out the reaction 4-carboxy-L-glutamyl-[protein] + 2,3-epoxyphylloquinone + H2O + H(+) = phylloquinol + L-glutamyl-[protein] + CO2 + O2. Its function is as follows. Mediates the vitamin K-dependent carboxylation of glutamate residues to calcium-binding gamma-carboxyglutamate (Gla) residues with the concomitant conversion of the reduced hydroquinone form of vitamin K to vitamin K epoxide. Catalyzes gamma-carboxylation of various proteins, such as blood coagulation factors (F2, F7, F9 and F10), osteocalcin (BGLAP) or matrix Gla protein (MGP). The chain is Vitamin K-dependent gamma-carboxylase (GGCX) from Delphinapterus leucas (Beluga whale).